The sequence spans 571 residues: Proline--tRNA ligase (571 aa).

The protein belongs to the class-II aminoacyl-tRNA synthetase family. ProS type 1 subfamily. Homodimer.

It localises to the cytoplasm. The catalysed reaction is tRNA(Pro) + L-proline + ATP = L-prolyl-tRNA(Pro) + AMP + diphosphate. In terms of biological role, catalyzes the attachment of proline to tRNA(Pro) in a two-step reaction: proline is first activated by ATP to form Pro-AMP and then transferred to the acceptor end of tRNA(Pro). As ProRS can inadvertently accommodate and process non-cognate amino acids such as alanine and cysteine, to avoid such errors it has two additional distinct editing activities against alanine. One activity is designated as 'pretransfer' editing and involves the tRNA(Pro)-independent hydrolysis of activated Ala-AMP. The other activity is designated 'posttransfer' editing and involves deacylation of mischarged Ala-tRNA(Pro). The misacylated Cys-tRNA(Pro) is not edited by ProRS. The sequence is that of Proline--tRNA ligase from Vibrio vulnificus (strain YJ016).